A 398-amino-acid chain; its full sequence is Fructose-bisphosphate aldolase 2, chloroplastic (398 aa).

Residues 1–46 (MASTSLLKASPVLDKSEWVKGQSVLFRQPSSASVVLRNRATSLTVR) constitute a chloroplast transit peptide. A substrate-binding site is contributed by R95. Phosphoserine is present on S157. Substrate is bound at residue K185. S215 bears the Phosphoserine mark. E225 serves as the catalytic Proton acceptor. Residue K267 is the Schiff-base intermediate with dihydroxyacetone-P of the active site. 309–311 (SGG) lines the substrate pocket. K394 bears the N6,N6,N6-trimethyllysine mark.

It belongs to the class I fructose-bisphosphate aldolase family. In terms of assembly, homotetramer. In terms of processing, can be trimethylated at Lys-394 by LSMT-L. The methylation level has no influence on the ologomerization state or on the kinetic properties of the enzyme. Post-translationally, phosphorylated on tyrosine residues in response to abscisic acid (ABA) in germinating seeds. As to expression, highly expressed in rosettes leaves.

It is found in the plastid. It localises to the chloroplast. Its subcellular location is the plastoglobule. The protein resides in the chloroplast stroma. The enzyme catalyses beta-D-fructose 1,6-bisphosphate = D-glyceraldehyde 3-phosphate + dihydroxyacetone phosphate. It participates in carbohydrate degradation; glycolysis; D-glyceraldehyde 3-phosphate and glycerone phosphate from D-glucose: step 4/4. Plays a key role in glycolysis and gluconeogenesis. The polypeptide is Fructose-bisphosphate aldolase 2, chloroplastic (Arabidopsis thaliana (Mouse-ear cress)).